We begin with the raw amino-acid sequence, 118 residues long: Large ribosomal subunit protein bL19 (118 aa).

The protein belongs to the bacterial ribosomal protein bL19 family.

Functionally, this protein is located at the 30S-50S ribosomal subunit interface and may play a role in the structure and function of the aminoacyl-tRNA binding site. This Buchnera aphidicola subsp. Baizongia pistaciae (strain Bp) protein is Large ribosomal subunit protein bL19.